Consider the following 807-residue polypeptide: uncharacterized protein (807 aa).

The signal sequence occupies residues 1-18 (MNTVLFVILLAAIGSNHG). Topologically, residues 19 to 704 (LIDERLTVNR…GLFTDIFGGE (686 aa)) are extracellular. Residues 133–142 (TTTTAAPQTG) are compositionally biased toward polar residues. The disordered stretch occupies residues 133–171 (TTTTAAPQTGNRRRRRAAGDEPNTDDNTPPNLEIPDWLD). N-linked (GlcNAc...) asparagine; by host glycosylation is found at Asn277 and Asn660. The chain crosses the membrane as a helical span at residues 705–725 (VWAVIAAIFSPVFLTAFALII). Over 726-807 (SLINFIPAVR…GERQVISRTN (82 aa)) the chain is Cytoplasmic.

The protein localises to the host membrane. This is an uncharacterized protein from Magallana gigas (Pacific oyster).